The primary structure comprises 316 residues: D-alanine--D-alanine ligase (316 aa).

Positions 104 to 303 (KRVWLQHGLP…YADLCVAILA (200 aa)) constitute an ATP-grasp domain. Position 130-185 (130-185 (PDRLGLPLILKPPHEGSTVGITKVAGYSDMKAAYELAARFDAEVLAEQFITGRELT)) interacts with ATP. 3 residues coordinate Mg(2+): aspartate 257, glutamate 270, and asparagine 272.

It belongs to the D-alanine--D-alanine ligase family. It depends on Mg(2+) as a cofactor. Mn(2+) serves as cofactor.

It localises to the cytoplasm. The enzyme catalyses 2 D-alanine + ATP = D-alanyl-D-alanine + ADP + phosphate + H(+). It functions in the pathway cell wall biogenesis; peptidoglycan biosynthesis. In terms of biological role, cell wall formation. The protein is D-alanine--D-alanine ligase of Bordetella bronchiseptica (strain ATCC BAA-588 / NCTC 13252 / RB50) (Alcaligenes bronchisepticus).